The following is a 330-amino-acid chain: Ketol-acid reductoisomerase (NADP(+)) (330 aa).

The KARI N-terminal Rossmann domain occupies 1 to 181; sequence MNAYYEQDAD…GGTKAGVIET (181 aa). Residues 24-27, arginine 47, serine 50, serine 52, and 82-85 each bind NADP(+); these read YGSQ and DQYQ. Residue histidine 107 is part of the active site. Glycine 133 is an NADP(+) binding site. In terms of domain architecture, KARI C-terminal knotted spans 182-327; it reads TFKNETETDL…SKLRDMMSWL (146 aa). The Mg(2+) site is built by aspartate 190, glutamate 194, glutamate 226, and glutamate 230. Residue serine 251 coordinates substrate.

It belongs to the ketol-acid reductoisomerase family. It depends on Mg(2+) as a cofactor.

It carries out the reaction (2R)-2,3-dihydroxy-3-methylbutanoate + NADP(+) = (2S)-2-acetolactate + NADPH + H(+). The catalysed reaction is (2R,3R)-2,3-dihydroxy-3-methylpentanoate + NADP(+) = (S)-2-ethyl-2-hydroxy-3-oxobutanoate + NADPH + H(+). Its pathway is amino-acid biosynthesis; L-isoleucine biosynthesis; L-isoleucine from 2-oxobutanoate: step 2/4. It participates in amino-acid biosynthesis; L-valine biosynthesis; L-valine from pyruvate: step 2/4. Functionally, involved in the biosynthesis of branched-chain amino acids (BCAA). Catalyzes an alkyl-migration followed by a ketol-acid reduction of (S)-2-acetolactate (S2AL) to yield (R)-2,3-dihydroxy-isovalerate. In the isomerase reaction, S2AL is rearranged via a Mg-dependent methyl migration to produce 3-hydroxy-3-methyl-2-ketobutyrate (HMKB). In the reductase reaction, this 2-ketoacid undergoes a metal-dependent reduction by NADPH to yield (R)-2,3-dihydroxy-isovalerate. This is Ketol-acid reductoisomerase (NADP(+)) from Chlorobium limicola (strain DSM 245 / NBRC 103803 / 6330).